The following is a 475-amino-acid chain: Exodeoxyribonuclease I (475 aa).

The Exonuclease domain maps to 13–192; that stretch reads FHDYETFGTH…AMADVYATIA (180 aa). Mg(2+) contacts are provided by Asp-15 and Glu-17. 2 residues coordinate substrate: Glu-17 and Arg-165. Asp-186 is a binding site for Mg(2+). Residues 202–355 enclose the ExoI SH3-like domain; it reads PRLFDYLFTH…KVVAIFAEAE (154 aa). One can recognise an ExoI C-terminal domain in the interval 358–475; sequence TPSDNVDAQL…ALWQYAEEIV (118 aa).

In terms of assembly, monomer. Interacts with ssb (via C-terminus); this interaction stimulates the exonuclease activity by recruiting the enzyme to its substrate. Mg(2+) serves as cofactor.

The enzyme catalyses Exonucleolytic cleavage in the 3'- to 5'-direction to yield nucleoside 5'-phosphates.. With respect to regulation, inhibited by 10 mM EDTA. In terms of biological role, degrades single-stranded DNA (ssDNA) in a highly processive manner. Also functions as a DNA deoxyribophosphodiesterase that releases deoxyribose-phosphate moieties following the cleavage of DNA at an apurinic/apyrimidinic (AP) site by either an AP endonuclease or AP lyase. In Escherichia coli (strain K12), this protein is Exodeoxyribonuclease I (sbcB).